We begin with the raw amino-acid sequence, 347 residues long: Phenylalanine--tRNA ligase alpha subunit (347 aa).

Glutamate 265 is a binding site for Mg(2+).

The protein belongs to the class-II aminoacyl-tRNA synthetase family. Phe-tRNA synthetase alpha subunit type 1 subfamily. As to quaternary structure, tetramer of two alpha and two beta subunits. Mg(2+) is required as a cofactor.

It localises to the cytoplasm. It catalyses the reaction tRNA(Phe) + L-phenylalanine + ATP = L-phenylalanyl-tRNA(Phe) + AMP + diphosphate + H(+). In Wolbachia sp. subsp. Drosophila simulans (strain wRi), this protein is Phenylalanine--tRNA ligase alpha subunit.